Here is a 178-residue protein sequence, read N- to C-terminus: Photosystem II extrinsic protein V (178 aa).

A signal peptide spans 1-38 (MFSKFFSLQKAFAAARRRLLILILVLGMAGYAWGPALA). Heme c is bound by residues cysteine 71, cysteine 74, histidine 75, and histidine 126.

The protein belongs to the cytochrome c family. PsbV subfamily. PSII is composed of 1 copy each of membrane proteins PsbA, PsbB, PsbC, PsbD, PsbE, PsbF, PsbH, PsbI, PsbJ, PsbK, PsbL, PsbM, PsbT, PsbX, PsbY, PsbZ, Psb30/Ycf12, peripheral proteins PsbO, CyanoQ (PsbQ), PsbU, PsbV and a large number of cofactors. It forms dimeric complexes. Heme c is required as a cofactor.

It localises to the cellular thylakoid membrane. In terms of biological role, one of the extrinsic, lumenal subunits of photosystem II (PSII). PSII is a light-driven water plastoquinone oxidoreductase, using light energy to abstract electrons from H(2)O, generating a proton gradient subsequently used for ATP formation. The extrinsic proteins stabilize the structure of photosystem II oxygen-evolving complex (OEC), the ion environment of oxygen evolution and protect the OEC against heat-induced inactivation. Low-potential cytochrome c that plays a role in the OEC of PSII. The chain is Photosystem II extrinsic protein V from Synechococcus sp. (strain JA-3-3Ab) (Cyanobacteria bacterium Yellowstone A-Prime).